Reading from the N-terminus, the 394-residue chain is Hemagglutinin-esterase (394 aa).

Residues 1 to 16 (MARFIILFLLLAPVYS) form the signal peptide. Residues 17 to 347 (RLCLRNHPDT…NNRVDAIPPQ (331 aa)) are Extracellular-facing. Residue serine 32 is part of the active site. The Cell attachment site signature appears at 119–121 (RGD). Catalysis depends on residues aspartate 261 and histidine 264. Asparagine 333 carries an N-linked (GlcNAc...) asparagine; by host glycan. The tract at residues 335-358 (TDVNNRVDAIPPQLSNIFISMGVA) is highly polymorphic region. Residues 348–368 (LSNIFISMGVAGFGIALFLAG) form a helical membrane-spanning segment. Topologically, residues 369–394 (WKACVWIAAFMYKSRGRNPPANLSVA) are cytoplasmic.

The protein resides in the host membrane. It localises to the virion membrane. The enzyme catalyses N-acetyl-9-O-acetylneuraminate + H2O = N-acetylneuraminate + acetate + H(+). It catalyses the reaction N-acetyl-4-O-acetylneuraminate + H2O = N-acetylneuraminate + acetate + H(+). In terms of biological role, performs attachment to host receptor thereby inducing virus particle entry into target cell. Binds specifically to 5-N-acetyl-4-O-acetyl neuraminic acid on host cells, which plays a major role in cell tropism of the virus. ALso mediates de-O-acetylation of N-acetyl-4-O-acetylneuraminic acid. This receptor-destroying activity is important for virus release as it probably helps preventing self-aggregation and ensures the efficient spread of the progeny virus from cell to cell. The highly polymorphic region (HPR) modulates the virulence in host. Catalyzes the removal of terminal sialic acid residues from viral and cellular glycoconjugates. The chain is Hemagglutinin-esterase from Gadus morhua (Atlantic cod).